Consider the following 122-residue polypeptide: UPF0102 protein Atu0303 (122 aa).

It belongs to the UPF0102 family.

In Agrobacterium fabrum (strain C58 / ATCC 33970) (Agrobacterium tumefaciens (strain C58)), this protein is UPF0102 protein Atu0303.